The chain runs to 130 residues: Small ribosomal subunit protein uS8 (130 aa).

It belongs to the universal ribosomal protein uS8 family. Part of the 30S ribosomal subunit. Contacts proteins S5 and S12.

Its function is as follows. One of the primary rRNA binding proteins, it binds directly to 16S rRNA central domain where it helps coordinate assembly of the platform of the 30S subunit. The chain is Small ribosomal subunit protein uS8 from Pectobacterium atrosepticum (strain SCRI 1043 / ATCC BAA-672) (Erwinia carotovora subsp. atroseptica).